Here is a 274-residue protein sequence, read N- to C-terminus: ATP synthase subunit a (274 aa).

5 helical membrane passes run 44–64 (VDSM…FYMV), 110–130 (FIWV…FPFI), 142–164 (IVPS…LILF), 212–232 (LFGN…LLPW), and 243–263 (AIFH…LTIV).

Belongs to the ATPase A chain family. As to quaternary structure, F-type ATPases have 2 components, CF(1) - the catalytic core - and CF(0) - the membrane proton channel. CF(1) has five subunits: alpha(3), beta(3), gamma(1), delta(1), epsilon(1). CF(0) has three main subunits: a(1), b(2) and c(9-12). The alpha and beta chains form an alternating ring which encloses part of the gamma chain. CF(1) is attached to CF(0) by a central stalk formed by the gamma and epsilon chains, while a peripheral stalk is formed by the delta and b chains.

It localises to the cell membrane. In terms of biological role, key component of the proton channel; it plays a direct role in the translocation of protons across the membrane. The sequence is that of ATP synthase subunit a from Buchnera aphidicola subsp. Acyrthosiphon pisum (strain APS) (Acyrthosiphon pisum symbiotic bacterium).